Here is a 2211-residue protein sequence, read N- to C-terminus: Nonribosomal peptide synthetase 13 (2211 aa).

The interval 76–475 is adenylation 1; it reads TYAELDSLSD…IEHHLQLTLP (400 aa). Positions 594 to 671 constitute a Carrier 1 domain; the sequence is PPSTPKEATI…EQSKRAGLIQ (78 aa). The residue at position 631 (Ser631) is an O-(pantetheine 4'-phosphoryl)serine. Residues 710–975 are condensation 1; sequence EDIYPCTALQ…IATVPTRIRV (266 aa). Positions 1169–1563 are adenylation 2; sequence TYRELWAHSS…LGAVEASVMR (395 aa). In terms of domain architecture, Carrier 2 spans 1677–1756; that stretch reads PMSDDNERRL…RSRHLITEQA (80 aa). The residue at position 1714 (Ser1714) is an O-(pantetheine 4'-phosphoryl)serine. The interval 1814-2069 is condensation 2; it reads HFQFDLSGAV…CTNYIPYRLS (256 aa).

This sequence belongs to the NRP synthetase family.

The catalysed reaction is L-proline + L-tryptophan + 2 ATP = brevianamide F + 2 AMP + 2 diphosphate + 2 H(+). It functions in the pathway mycotoxin biosynthesis. Nonribosomal peptide synthetase; part of the gene cluster that mediates the biosynthesis of fumitremorgins, indole alkaloids that carry not only intriguing chemical structures, but also interesting biological and pharmacological activities. The biosynthesis of fumitremorgin-type alkaloids begins by condensation of the two amino acids L-tryptophan and L-proline to brevianamide F, catalyzed by the non-ribosomal peptide synthetase ftmA. Brevianamide F is then prenylated by the prenyltransferase ftmPT1/ftmB in the presence of dimethylallyl diphosphate, resulting in the formation of tryprostatin B. The three cytochrome P450 monooxygenases, ftmP450-1/ftmC, ftmP450-2/ftmE and ftmP450-3/FtmG, are responsible for the conversion of tryprostatin B to 6-hydroxytryprostatin B, tryprostatin A to fumitremorgin C and fumitremorgin C to 12,13-dihydroxyfumitremorgin C, respectively. The putative methyltransferase ftmMT/ftmD is expected for the conversion of 6-hydroxytryprostatin B to tryprostatin A. FtmPT2/FtmH catalyzes the prenylation of 12,13-dihydroxyfumitre-morgin C in the presence of dimethylallyl diphosphate, resulting in the formation of fumitremorgin B. Fumitremorgin B is further converted to verruculogen by ftmOx1/ftmF via the insertion of an endoperoxide bond between the two prenyl moieties. In some fungal species, verruculogen is further converted to fumitremorgin A, but the enzymes involved in this step have not been identified yet. The chain is Nonribosomal peptide synthetase 13 from Aspergillus fumigatus (Neosartorya fumigata).